Consider the following 129-residue polypeptide: Small ribosomal subunit protein uS11 (129 aa).

The protein belongs to the universal ribosomal protein uS11 family. In terms of assembly, part of the 30S ribosomal subunit. Interacts with proteins S7 and S18. Binds to IF-3.

Located on the platform of the 30S subunit, it bridges several disparate RNA helices of the 16S rRNA. Forms part of the Shine-Dalgarno cleft in the 70S ribosome. This chain is Small ribosomal subunit protein uS11, found in Aliivibrio fischeri (strain ATCC 700601 / ES114) (Vibrio fischeri).